Reading from the N-terminus, the 300-residue chain is Fatty acid elongase 3 (300 aa).

The next 3 membrane-spanning stretches (helical) occupy residues 31-51 (VPAV…ENVM), 61-81 (FLNM…AYYC), and 127-147 (IFFD…KIPE). Positions 165–169 (HWYHH) match the HxxHH motif motif. The active-site Nucleophile is His-168. Transmembrane regions (helical) follow at residues 170–190 (ATVM…GLWF), 192–212 (TMNY…ACGM), 219–239 (IAPL…LIVL), and 261–283 (MGLL…SYIS).

It belongs to the ELO family.

The protein resides in the endoplasmic reticulum membrane. It carries out the reaction an acyl-CoA + malonyl-CoA + H(+) = a 3-oxoacyl-CoA + CO2 + CoA. It participates in lipid metabolism; fatty acid biosynthesis. In terms of biological role, involved in the synthesis of fatty acids. Elongates C14 fatty acids to C18. Required for the maintenance of the global lipidome profile in this parasite. This is Fatty acid elongase 3 from Trypanosoma cruzi (strain CL Brener).